A 71-amino-acid chain; its full sequence is Small ribosomal subunit protein bS21 (71 aa).

Over residues 49-59 the composition is skewed to basic residues; it reads KAAAVKRAAKK. The tract at residues 49-71 is disordered; sequence KAAAVKRAAKKVSRENARRVRMY. Residues 60-71 are compositionally biased toward basic and acidic residues; that stretch reads VSRENARRVRMY.

This sequence belongs to the bacterial ribosomal protein bS21 family.

The protein is Small ribosomal subunit protein bS21 of Colwellia psychrerythraea (strain 34H / ATCC BAA-681) (Vibrio psychroerythus).